A 491-amino-acid polypeptide reads, in one-letter code: Glutamyl-tRNA(Gln) amidotransferase subunit A (491 aa).

Catalysis depends on charge relay system residues Lys78 and Ser158. Catalysis depends on Ser182, which acts as the Acyl-ester intermediate.

This sequence belongs to the amidase family. GatA subfamily. As to quaternary structure, heterotrimer of A, B and C subunits.

The catalysed reaction is L-glutamyl-tRNA(Gln) + L-glutamine + ATP + H2O = L-glutaminyl-tRNA(Gln) + L-glutamate + ADP + phosphate + H(+). Its function is as follows. Allows the formation of correctly charged Gln-tRNA(Gln) through the transamidation of misacylated Glu-tRNA(Gln) in organisms which lack glutaminyl-tRNA synthetase. The reaction takes place in the presence of glutamine and ATP through an activated gamma-phospho-Glu-tRNA(Gln). This chain is Glutamyl-tRNA(Gln) amidotransferase subunit A, found in Nitrobacter hamburgensis (strain DSM 10229 / NCIMB 13809 / X14).